Consider the following 156-residue polypeptide: Endogenous retrovirus group K member 19 Pro protein (156 aa).

The 76-residue stretch at phenylalanine 21–leucine 96 folds into the Peptidase A2 domain. Aspartate 26 is an active-site residue. The G-patch domain occupies tyrosine 111–phenylalanine 156.

Belongs to the peptidase A2 family. HERV class-II K(HML-2) subfamily. Active as a homodimer. In terms of processing, autoproteolytically processed at the N-terminus. Expected C-terminal autoprocessing not detected. The sequence shown is that of the processed Pro protein.

The enzyme catalyses Processing at the authentic HIV-1 PR recognition site and release of the mature p17 matrix and the p24 capsid protein, as a result of the cleavage of the -SQNY-|-PIVQ- cleavage site.. Functionally, retroviral proteases have roles in the processing of the primary translation products and the maturation of the viral particle. Endogenous Pro proteins may have kept, lost or modified their original function during evolution. This Homo sapiens (Human) protein is Endogenous retrovirus group K member 19 Pro protein (ERVK-19).